We begin with the raw amino-acid sequence, 282 residues long: Pantothenate synthetase (282 aa).

Residue Met30–His37 participates in ATP binding. Residue His37 is the Proton donor of the active site. (R)-pantoate is bound at residue Gln61. A beta-alanine-binding site is contributed by Gln61. Residue Gly147–Asp150 participates in ATP binding. Gln153 provides a ligand contact to (R)-pantoate. ATP contacts are provided by residues Val176 and Met184–Arg187.

The protein belongs to the pantothenate synthetase family. Homodimer.

It is found in the cytoplasm. It carries out the reaction (R)-pantoate + beta-alanine + ATP = (R)-pantothenate + AMP + diphosphate + H(+). The protein operates within cofactor biosynthesis; (R)-pantothenate biosynthesis; (R)-pantothenate from (R)-pantoate and beta-alanine: step 1/1. Functionally, catalyzes the condensation of pantoate with beta-alanine in an ATP-dependent reaction via a pantoyl-adenylate intermediate. The protein is Pantothenate synthetase of Geotalea daltonii (strain DSM 22248 / JCM 15807 / FRC-32) (Geobacter daltonii).